The following is a 402-amino-acid chain: MYTSEEKCNQRTQKRKIYNVCPRKGKKIFIHMHEIIQIDGHIYQCLECKQNFCENLALIMCERTHTGEKPYKCDMCEKTFVQSSDLTSHQRIHNYEKPYKCSKCEKSFWHHLALSGHQRTHAGKKFYTCDICGKNFGQSSDLLVHQRSHTGEKPYLCSECDKCFSRSTNLIRHRRTHTGEKPFKCLECEKAFSGKSDLISHQRTHTGERPYKCNKCEKSYRHRSAFIVHKRVHTGEKPYKCGACEKCFGQKSDLIVHQRVHTGEKPYKCLECMRSFTRSANLIRHQATHTHTFKCLEYEKSFNCSSDLIVHQRIHMEEKPHQWSACESGFLLGMDFVAQQKMRTQTEELHYKYTVCDKSFHQSSALLQHQTVHIGEKPFVCNVSEKGLELSPPHASEASQMS.

Residues 43–65 form a C2H2-type 1; atypical zinc finger; that stretch reads YQCLECKQNFCENLALIMCERTH. C2H2-type zinc fingers lie at residues 71-93, 99-121, 127-149, 155-177, 183-205, 211-233, 239-261, and 267-289; these read YKCD…QRIH, YKCS…QRTH, YTCD…QRSH, YLCS…RRTH, FKCL…QRTH, YKCN…KRVH, YKCG…QRVH, and YKCL…QATH. The C2H2-type 10; degenerate zinc finger occupies 293-315; the sequence is FKCLEYEKSFNCSSDLIVHQRIH. A C2H2-type 11; degenerate zinc finger spans residues 351–373; it reads YKYTVCDKSFHQSSALLQHQTVH. Phosphoserine is present on Ser391.

The protein belongs to the krueppel C2H2-type zinc-finger protein family. As to quaternary structure, interacts with POU5F1. Ubiquitous. Highly expressed in heart and skeletal muscle.

Its subcellular location is the cytoplasm. It is found in the nucleus. In terms of biological role, transcriptional activator. Important for maintenance of pluripotency in embryonic stem cells. Binds directly to the POU5F1 distal enhancer and the NANOG proximal promoter, and enhances expression of both genes. Can also bind to numerous other gene promoters and regulates expression of many other pluripotency factors, either directly or indirectly. Promotes inhibition of MAPK signaling during embryonic stem cell differentiation. The protein is Zinc finger protein 322 (ZNF322) of Homo sapiens (Human).